Here is a 191-residue protein sequence, read N- to C-terminus: Orotate phosphoribosyltransferase (191 aa).

114–122 (EDVVTTGKS) lines the 5-phospho-alpha-D-ribose 1-diphosphate pocket. Positions 118 and 146 each coordinate orotate.

Belongs to the purine/pyrimidine phosphoribosyltransferase family. PyrE subfamily. In terms of assembly, homodimer. Mg(2+) serves as cofactor.

The catalysed reaction is orotidine 5'-phosphate + diphosphate = orotate + 5-phospho-alpha-D-ribose 1-diphosphate. Its pathway is pyrimidine metabolism; UMP biosynthesis via de novo pathway; UMP from orotate: step 1/2. Catalyzes the transfer of a ribosyl phosphate group from 5-phosphoribose 1-diphosphate to orotate, leading to the formation of orotidine monophosphate (OMP). The protein is Orotate phosphoribosyltransferase of Clostridium botulinum (strain Langeland / NCTC 10281 / Type F).